Here is a 355-residue protein sequence, read N- to C-terminus: Putative inositol monophosphatase 3 (355 aa).

A helical membrane pass occupies residues 16–36; the sequence is VPATIFAILLTIVLVYFLNFH. Positions 127, 167, 169, 170, and 292 each coordinate Mg(2+). A substrate-binding site is contributed by E127. Residues 169 to 172 and D292 contribute to the substrate site; that span reads LDAT.

The protein belongs to the inositol monophosphatase superfamily. Mg(2+) serves as cofactor.

Its subcellular location is the membrane. It carries out the reaction a myo-inositol phosphate + H2O = myo-inositol + phosphate. Its pathway is polyol metabolism; myo-inositol biosynthesis; myo-inositol from D-glucose 6-phosphate: step 2/2. The sequence is that of Putative inositol monophosphatase 3 from Drosophila pseudoobscura pseudoobscura (Fruit fly).